We begin with the raw amino-acid sequence, 953 residues long: MNASGRSHSKGPIIRSVSLEDLKRNSSFKGNLKYKDEVTSHKEPQVGTLSNEELLKDLDNMLRGKLNMGRNSFHADKRNKSDGNISALTFKARSGLEGDIRTIDIQQDSSDENDNFKFSDDGVNKDRNNEKDNNTDNAVEFQDDAEEAEEENEDESFANVDELDGFDLNKVSDGKHVPINEKGEVDYNMPVDKEFQKSLDQCAASLEERSSAPYALQRAVDWELKMFYSLEDELSEWFCSSDYMHFGQTQTLFKQKITQPQLFFDDENYAASVVECLIEDIPNSLASNLLALSYISMGCFAFTNSKSEHTKIIRRNNLMLVPHIQEIVHAFKKIAISCRDDNRNLKKQTILLFHSSTILYFICSICIEGRGENPEAVNVVIDAFEKTDLLEFLTKYIENWRWNSRLAMRIRNMISLLFKLIVLQFGDSSVYKQTKSSIYNLHGLTYPSKHPEKLSISPLHYQAFREDITSRFPDYNMPSSGLPKDVDKSESLSQFLEIPRPKSKNPLNMALIVPEKHIATPAPSPPSSPQLMHLGEGPRPRKSFQTNMAYPCLYPSDNEGSEDDTLEDRIDLNIERKPDNDIVIPFSTEEAARILSESLEIKLSTKQLWYERDLFMITERGWKQQLENEPYDYAALNHDANSSKEEKSAICIMQRIDKYYKSCLSSFNSLVFVLLQTMESSLTNNFHRKSEVSDKNLLNMLTPQLEIVRAKELSLKSAAGILHALLKWFKLSHILKFEHLAVVIHDSRYINTCASILSKYSEVYPERVFNKYVQTPNSFWKECSLSNESYRESYSVDDSGEVDTEIMPSFAYLLRILRKVTGNKTQRLKELPLSIGILFKRYYRLFNLDMYHPILKITRELTPFKNKRWKSEHMELISGVYLYEKLELTDNWVTGKDISGELSDACGQEIALRALLQFYNFQHYEISMEDLGYGHRNSSSQDLLNKESEYLNI.

Phosphoserine occurs at positions 18 and 81. Residues 104–160 (DIQQDSSDENDNFKFSDDGVNKDRNNEKDNNTDNAVEFQDDAEEAEEENEDESFANV) form a disordered region. Residues 114–134 (DNFKFSDDGVNKDRNNEKDNN) show a composition bias toward basic and acidic residues. Residues 141-160 (FQDDAEEAEEENEDESFANV) are compositionally biased toward acidic residues. 3 positions are modified to phosphoserine: Ser-524, Ser-527, and Ser-528.

It belongs to the FAR11 family. Component of a complex at least composed of FAR3, FAR7, FAR8, FAR10, FAR11 and VPS64.

Participates in the control of the reentry into the cell cycle following pheromone treatment. This is Factor arrest protein 11 (FAR11) from Saccharomyces cerevisiae (strain ATCC 204508 / S288c) (Baker's yeast).